The following is a 210-amino-acid chain: Glycerol-3-phosphate acyltransferase (210 aa).

A run of 5 helical transmembrane segments spans residues 4–24 (LIVA…IVSA), 52–72 (AAIL…WLTG), 82–102 (DTSV…PVFF), 118–138 (LAIN…VAFF), and 159–179 (FLFG…LLIW).

It belongs to the PlsY family. As to quaternary structure, probably interacts with PlsX.

It is found in the cell inner membrane. It carries out the reaction an acyl phosphate + sn-glycerol 3-phosphate = a 1-acyl-sn-glycero-3-phosphate + phosphate. The protein operates within lipid metabolism; phospholipid metabolism. Its function is as follows. Catalyzes the transfer of an acyl group from acyl-phosphate (acyl-PO(4)) to glycerol-3-phosphate (G3P) to form lysophosphatidic acid (LPA). This enzyme utilizes acyl-phosphate as fatty acyl donor, but not acyl-CoA or acyl-ACP. The protein is Glycerol-3-phosphate acyltransferase of Paraburkholderia phymatum (strain DSM 17167 / CIP 108236 / LMG 21445 / STM815) (Burkholderia phymatum).